A 289-amino-acid chain; its full sequence is Ribosomal RNA small subunit methyltransferase A (289 aa).

S-adenosyl-L-methionine-binding residues include Asn21, Leu23, Gly48, Glu69, Asp94, and Asn120.

Belongs to the class I-like SAM-binding methyltransferase superfamily. rRNA adenine N(6)-methyltransferase family. RsmA subfamily.

It is found in the cytoplasm. The catalysed reaction is adenosine(1518)/adenosine(1519) in 16S rRNA + 4 S-adenosyl-L-methionine = N(6)-dimethyladenosine(1518)/N(6)-dimethyladenosine(1519) in 16S rRNA + 4 S-adenosyl-L-homocysteine + 4 H(+). In terms of biological role, specifically dimethylates two adjacent adenosines (A1518 and A1519) in the loop of a conserved hairpin near the 3'-end of 16S rRNA in the 30S particle. May play a critical role in biogenesis of 30S subunits. In Actinobacillus pleuropneumoniae serotype 5b (strain L20), this protein is Ribosomal RNA small subunit methyltransferase A.